Here is a 692-residue protein sequence, read N- to C-terminus: Methionine--tRNA ligase (692 aa).

The 'HIGH' region signature appears at Pro12–His22. The Zn(2+) site is built by Cys143, Cys146, Cys156, and Cys159. The short motif at Lys341 to Ser345 is the 'KMSKS' region element. Lys344 contacts ATP. A tRNA-binding domain is found at Asp586–Arg692.

The protein belongs to the class-I aminoacyl-tRNA synthetase family. MetG type 1 subfamily. As to quaternary structure, homodimer. Zn(2+) serves as cofactor.

It is found in the cytoplasm. It carries out the reaction tRNA(Met) + L-methionine + ATP = L-methionyl-tRNA(Met) + AMP + diphosphate. In terms of biological role, is required not only for elongation of protein synthesis but also for the initiation of all mRNA translation through initiator tRNA(fMet) aminoacylation. In Bordetella bronchiseptica (strain ATCC BAA-588 / NCTC 13252 / RB50) (Alcaligenes bronchisepticus), this protein is Methionine--tRNA ligase.